A 340-amino-acid polypeptide reads, in one-letter code: Pilin (340 aa).

Positions 1-23 (MKLRHLLLTGAALTSFAATTVHG) are cleaved as a signal peptide. Cross-links (isoaspartyl lysine isopeptide (Lys-Asn)) lie at residues 36–168 (KNLD…QFKN) and 179–303 (KKVS…TFTN). A Threonyl lysine isopeptide (Lys-Thr) (interchain with T-311) cross-link involves residue Lys-161. An EVPTG sorting signal motif is present at residues 308–312 (EVPTG). Thr-311 carries the post-translational modification Pentaglycyl murein peptidoglycan amidated threonine; alternate. Residue Thr-311 forms a Threonyl lysine isopeptide (Thr-Lys) (interchain with K-161); alternate linkage. The propeptide at 312 to 340 (GVAMTVAPYIALGIVAVGGALYFVKKKNA) is removed by sortase C1.

Belongs to the Streptococcus pilin family. Forms columns of about 3-nanometers in diameter of head-to-tail-assembled molecules. Proteolytically processed and assembled in pili through a transpeptidation reaction catalyzed by the sortase C1. The last pilin subunit is cross-linked to the peptidoglycan.

The protein resides in the secreted. The protein localises to the cell wall. It localises to the fimbrium. Its function is as follows. Major component of the pilus. A stack of the pilin subunits, joined by intermolecular isopeptide bonds, forms the pilus. The pilus is required for bacterial adhesion to host cells, for bacterial aggregation, and for biofilm formation. In Streptococcus pyogenes serotype M1, this protein is Pilin.